Reading from the N-terminus, the 33-residue chain is Phosphoglycerate kinase (33 aa).

Residue Lys13 participates in AMP binding. Residue Lys13 coordinates ATP.

It belongs to the phosphoglycerate kinase family. As to quaternary structure, monomer. Mg(2+) serves as cofactor.

It carries out the reaction (2R)-3-phosphoglycerate + ATP = (2R)-3-phospho-glyceroyl phosphate + ADP. The sequence is that of Phosphoglycerate kinase from Pseudotsuga menziesii (Douglas-fir).